The following is a 361-amino-acid chain: MRPLFYRCHNTTSVEKGNSATMGGVLFSTGLVGNLLALGLLARSGLGSCPPRSPRPPPSVFYVLVFGLTITDLLGKCLVSPFVLSAYAQNRSLRELVPGSDSSLCQAFAFIMSFFGLASTLQLLAMALECWLSLGHPFFHRRHLTPRRGAMVAPVVGAFCLAFCALPLVGFGKFVQYCPGTWCFFQMVHEERSLSVLSYSVLYASLMLLLVLAIVLCNLSAMRNLYAMHLRLRGLLRPGSRERAEPGAGEREATPLHLEELDHLLLLALMTVLFTMCSLPLIYRAYYGAFKAVPEQNGTTEETEDLRALRFLSVISIVDPWIFIIFRTSVFRMFFRKIFIRPLIYRNWHSNSCQTNMESSL.

The Extracellular segment spans residues 1–21; the sequence is MRPLFYRCHNTTSVEKGNSAT. Asn10 is a glycosylation site (N-linked (GlcNAc...) asparagine). The chain crosses the membrane as a helical span at residues 22–42; it reads MGGVLFSTGLVGNLLALGLLA. The Cytoplasmic portion of the chain corresponds to 43–58; that stretch reads RSGLGSCPPRSPRPPP. A helical transmembrane segment spans residues 59 to 79; it reads SVFYVLVFGLTITDLLGKCLV. Residues 80–107 are Extracellular-facing; it reads SPFVLSAYAQNRSLRELVPGSDSSLCQA. Asn90 is a glycosylation site (N-linked (GlcNAc...) asparagine). Cysteines 105 and 183 form a disulfide. A helical membrane pass occupies residues 108-128; the sequence is FAFIMSFFGLASTLQLLAMAL. Residues 129 to 150 are Cytoplasmic-facing; the sequence is ECWLSLGHPFFHRRHLTPRRGA. The chain crosses the membrane as a helical span at residues 151 to 171; the sequence is MVAPVVGAFCLAFCALPLVGF. Over 172–195 the chain is Extracellular; sequence GKFVQYCPGTWCFFQMVHEERSLS. Residues 196-216 traverse the membrane as a helical segment; the sequence is VLSYSVLYASLMLLLVLAIVL. Topologically, residues 217 to 262 are cytoplasmic; sequence CNLSAMRNLYAMHLRLRGLLRPGSRERAEPGAGEREATPLHLEELD. Residues 263–283 traverse the membrane as a helical segment; sequence HLLLLALMTVLFTMCSLPLIY. The Extracellular portion of the chain corresponds to 284–310; sequence RAYYGAFKAVPEQNGTTEETEDLRALR. N-linked (GlcNAc...) asparagine glycosylation is present at Asn297. Residues 311–331 traverse the membrane as a helical segment; the sequence is FLSVISIVDPWIFIIFRTSVF. Topologically, residues 332–361 are cytoplasmic; the sequence is RMFFRKIFIRPLIYRNWHSNSCQTNMESSL.

The protein belongs to the G-protein coupled receptor 1 family.

It is found in the cell membrane. In terms of biological role, receptor for prostaglandin D2 (PGD2). The activity of this receptor is mainly mediated by G(s) proteins that stimulate adenylate cyclase, resulting in an elevation of intracellular cAMP. A mobilization of calcium is also observed, but without formation of inositol 1,4,5-trisphosphate. Involved in PLA2G3-dependent maturation of mast cells. PLA2G3 is secreted by immature mast cells and acts on nearby fibroblasts upstream to PTDGS to synthesize PGD2, which in turn promotes mast cell maturation and degranulation via PTGDR. The protein is Prostaglandin D2 receptor (PTGDR) of Bos taurus (Bovine).